A 333-amino-acid chain; its full sequence is 5-formaminoimidazole-4-carboxamide-1-(beta)-D-ribofuranosyl 5'-monophosphate synthetase (333 aa).

Histidine 21 and serine 84 together coordinate 5-amino-1-(5-phospho-beta-D-ribosyl)imidazole-4-carboxamide. In terms of domain architecture, ATP-grasp spans 118-313 (MELLAAAGIP…YFDEPMDMGE (196 aa)). ATP-binding positions include 141–187 (PVIV…VPAY) and glutamate 209. Asparagine 229 contributes to the 5-amino-1-(5-phospho-beta-D-ribosyl)imidazole-4-carboxamide binding site. Mg(2+)-binding residues include glutamate 268 and glutamate 281.

Belongs to the phosphohexose mutase family. Requires Mg(2+) as cofactor. Mn(2+) is required as a cofactor.

It catalyses the reaction 5-amino-1-(5-phospho-beta-D-ribosyl)imidazole-4-carboxamide + formate + ATP = 5-formamido-1-(5-phospho-D-ribosyl)imidazole-4-carboxamide + ADP + phosphate. It participates in purine metabolism; IMP biosynthesis via de novo pathway; 5-formamido-1-(5-phospho-D-ribosyl)imidazole-4-carboxamide from 5-amino-1-(5-phospho-D-ribosyl)imidazole-4-carboxamide (formate route): step 1/1. Functionally, catalyzes the ATP- and formate-dependent formylation of 5-aminoimidazole-4-carboxamide-1-beta-d-ribofuranosyl 5'-monophosphate (AICAR) to 5-formaminoimidazole-4-carboxamide-1-beta-d-ribofuranosyl 5'-monophosphate (FAICAR) in the absence of folates. In Pyrobaculum calidifontis (strain DSM 21063 / JCM 11548 / VA1), this protein is 5-formaminoimidazole-4-carboxamide-1-(beta)-D-ribofuranosyl 5'-monophosphate synthetase.